A 630-amino-acid polypeptide reads, in one-letter code: UvrABC system protein C (630 aa).

Residues threonine 18–isoleucine 97 enclose the GIY-YIG domain. The region spanning lysine 207 to isoleucine 242 is the UVR domain.

The protein belongs to the UvrC family. Interacts with UvrB in an incision complex.

Its subcellular location is the cytoplasm. Functionally, the UvrABC repair system catalyzes the recognition and processing of DNA lesions. UvrC both incises the 5' and 3' sides of the lesion. The N-terminal half is responsible for the 3' incision and the C-terminal half is responsible for the 5' incision. This chain is UvrABC system protein C, found in Bdellovibrio bacteriovorus (strain ATCC 15356 / DSM 50701 / NCIMB 9529 / HD100).